The sequence spans 614 residues: V-type proton ATPase catalytic subunit A isoform 2 (614 aa).

Ser-142 carries the phosphoserine modification. ATP is bound at residue 247–254 (GAFGCGKT).

The protein belongs to the ATPase alpha/beta chains family. As to quaternary structure, V-ATPase is a heteromultimeric enzyme made up of two complexes: the ATP-hydrolytic V1 complex and the proton translocation V0 complex. The V1 complex consists of three catalytic AB heterodimers that form a heterohexamer, three peripheral stalks each consisting of EG heterodimers, one central rotor including subunits D and F, and the regulatory subunits C and H. The proton translocation complex V0 consists of the proton transport subunit a, a ring of proteolipid subunits c9c'', rotary subunit d, subunits e and f, and the accessory subunits VhaAC45 and ATP6AP2.

It carries out the reaction ATP + H2O + 4 H(+)(in) = ADP + phosphate + 5 H(+)(out). Its activity is regulated as follows. ATP hydrolysis occurs at the interface between the nucleotide-binding domains of subunits A and B. ATP hydrolysis triggers a conformational change in the subunits D and F, which induces a shift of subunit d. The c-ring is subsequently rotated and results in a continuous proton translocation across the membrane. In terms of biological role, catalytic subunit of the V1 complex of vacuolar(H+)-ATPase (V-ATPase), a multisubunit enzyme composed of a peripheral complex (V1) that hydrolyzes ATP and a membrane integral complex (V0) that translocates protons. V-ATPase is responsible for acidifying and maintaining the pH of intracellular compartments and in some cell types, is targeted to the plasma membrane, where it is responsible for acidifying the extracellular environment. The chain is V-type proton ATPase catalytic subunit A isoform 2 (Vha68-2) from Drosophila melanogaster (Fruit fly).